Consider the following 458-residue polypeptide: tRNA modification GTPase MnmE (458 aa).

Arg30, Glu90, and Lys129 together coordinate (6S)-5-formyl-5,6,7,8-tetrahydrofolate. The region spanning 225-379 (GLSICLIGCP…LHQTIDTIIW (155 aa)) is the TrmE-type G domain. Residue Asn235 participates in K(+) binding. GTP is bound by residues 235 to 240 (NVGKSS), 254 to 260 (SPIPGTT), and 279 to 282 (DTAG). Position 239 (Ser239) interacts with Mg(2+). 3 residues coordinate K(+): Ser254, Ile256, and Thr259. Thr260 lines the Mg(2+) pocket. A (6S)-5-formyl-5,6,7,8-tetrahydrofolate-binding site is contributed by Lys458.

It belongs to the TRAFAC class TrmE-Era-EngA-EngB-Septin-like GTPase superfamily. TrmE GTPase family. Homodimer. Heterotetramer of two MnmE and two MnmG subunits. The cofactor is K(+).

The protein resides in the cytoplasm. Functionally, exhibits a very high intrinsic GTPase hydrolysis rate. Involved in the addition of a carboxymethylaminomethyl (cmnm) group at the wobble position (U34) of certain tRNAs, forming tRNA-cmnm(5)s(2)U34. In Protochlamydia amoebophila (strain UWE25), this protein is tRNA modification GTPase MnmE.